Reading from the N-terminus, the 473-residue chain is Photosystem II CP43 reaction center protein (473 aa).

The propeptide occupies 1–14 (MKTLYSLRRFYPVE). Thr-15 carries the post-translational modification N-acetylthreonine. At Thr-15 the chain carries Phosphothreonine. A run of 5 helical transmembrane segments spans residues 69–93 (LFEV…PHLA), 134–155 (LLGP…KDRN), 178–200 (KALY…RKIT), 255–275 (KPFA…LSYS), and 291–312 (WFNN…ASQA). Glu-367 contacts [CaMn4O5] cluster. A helical membrane pass occupies residues 447–471 (RARAAAAGFEKGIDRDFEPVLSMTP).

It belongs to the PsbB/PsbC family. PsbC subfamily. As to quaternary structure, PSII is composed of 1 copy each of membrane proteins PsbA, PsbB, PsbC, PsbD, PsbE, PsbF, PsbH, PsbI, PsbJ, PsbK, PsbL, PsbM, PsbT, PsbX, PsbY, PsbZ, Psb30/Ycf12, at least 3 peripheral proteins of the oxygen-evolving complex and a large number of cofactors. It forms dimeric complexes. Binds multiple chlorophylls and provides some of the ligands for the Ca-4Mn-5O cluster of the oxygen-evolving complex. It may also provide a ligand for a Cl- that is required for oxygen evolution. PSII binds additional chlorophylls, carotenoids and specific lipids. serves as cofactor.

Its subcellular location is the plastid. It localises to the chloroplast thylakoid membrane. In terms of biological role, one of the components of the core complex of photosystem II (PSII). It binds chlorophyll and helps catalyze the primary light-induced photochemical processes of PSII. PSII is a light-driven water:plastoquinone oxidoreductase, using light energy to abstract electrons from H(2)O, generating O(2) and a proton gradient subsequently used for ATP formation. The polypeptide is Photosystem II CP43 reaction center protein (Panax ginseng (Korean ginseng)).